Reading from the N-terminus, the 132-residue chain is Acid shock protein (132 aa).

An N-terminal signal peptide occupies residues 1 to 21 (MKKVLALVVAAAMGLSSAAFA). Low complexity predominate over residues 20–45 (FAAETTTSSAAPATATATTTKAAPAK). A disordered region spans residues 20–132 (FAAETTTSSA…AAKPAAQPAA (113 aa)). Positions 22-90 (AETTTSSAAP…TTAPVEQKAQ (69 aa)) are excised as a propeptide. Over residues 62-71 (AAKKHHKKAV) the composition is skewed to basic residues. Composition is skewed to low complexity over residues 76–90 (AAPA…QKAQ) and 100–109 (AKPAVAQKAQ). Residues 110–119 (AAKKHHKKAV) are compositionally biased toward basic residues.

Belongs to the Asr family. Proteolytic processing gives rise to the active protein.

It is found in the periplasm. Its function is as follows. Required for growth and/or survival at acidic conditions. The sequence is that of Acid shock protein from Enterobacter sp. (strain 638).